The sequence spans 773 residues: Elongin-A (773 aa).

The TFIIS N-terminal domain occupies 4 to 79; that stretch reads ESALQVVEKL…AQWKKLVPVE (76 aa). Over residues 79-93 the composition is skewed to basic and acidic residues; that stretch reads ERNNEAEDQDFEKSN. Positions 79 to 480 are disordered; that stretch reads ERNNEAEDQD…PRKVPTDVLP (402 aa). Residues 112–124 are compositionally biased toward polar residues; it reads YQESWQASGSQPY. Residues 136-156 show a composition bias toward basic and acidic residues; that stretch reads LPELERPHKVAHGHERRDERK. Positions 162–174 are enriched in low complexity; the sequence is SPPYSSDPESSDY. S195 carries the post-translational modification Phosphoserine. Residues 239–248 are compositionally biased toward basic residues; that stretch reads KPHKSSHKEK. 2 stretches are compositionally biased toward basic and acidic residues: residues 249–265 and 271–304; these read RPVD…MGRE and SSKE…EGNS. The residue at position 310 (S310) is a Phosphoserine. Basic and acidic residues-rich tracts occupy residues 317 to 339 and 368 to 380; these read SDNH…KNKQ and QEGK…DRKS. Residues S380 and S383 each carry the phosphoserine modification. The residue at position 430 (K430) is an N6-acetyllysine. S515 carries the phosphoserine modification. The tract at residues 521 to 680 is activation domain; the sequence is EAGFTGRRMN…PPRDVRRRQE (160 aa). The segment at 549–558 is BC-box; that stretch reads TLHQQCIRVL. The region spanning 565–609 is the F-box domain; it reads IFEVGGVPYSVLEPVLERCTPDQLYRIEECNHVLIEETDQLWKVH. The segment at 671-747 is disordered; sequence PPRDVRRRQE…VASSSVSYDP (77 aa). Over residues 704–718 the composition is skewed to low complexity; sequence SSHVPASNSSSSFHS. Positions 728 to 744 are enriched in polar residues; sequence PSTSSAHLAPVASSSVS.

As to quaternary structure, heterotrimer of an A (ELOA, ELOA2 or ELOA3P), ELOB and ELOC subunit. Part of a multisubunit ubiquitin ligase complex consisting of elongin BC complex (ELOB and ELOC), elongin A/ELOA, RBX1 and CUL5. Interacts with ERCC6; the interaction is induced by DNA damaging agents or inhibitors of RNA polymerase II elongation. Interacts (via BC-box) with CUL5.

It is found in the nucleus. SIII, also known as elongin, is a general transcription elongation factor that increases the RNA polymerase II transcription elongation past template-encoded arresting sites. Subunit A is transcriptionally active and its transcription activity is strongly enhanced by binding to the dimeric complex of the SIII regulatory subunits B and C (elongin BC complex). Its function is as follows. As part of a multisubunit complex composed of elongin BC complex (ELOB and ELOC), elongin A/ELOA, RBX1 and CUL5; polyubiquitinates monoubiquitinated POLR2A. The polypeptide is Elongin-A (Eloa) (Rattus norvegicus (Rat)).